Here is a 74-residue protein sequence, read N- to C-terminus: Peptide BmKb2 (74 aa).

The first 22 residues, Met-1 to Ala-22, serve as a signal peptide directing secretion. Residue Lys-40 is modified to Lysine amide. Residues Asp-46–Tyr-74 constitute a propeptide that is removed on maturation.

This sequence belongs to the non-disulfide-bridged peptide (NDBP) superfamily. Short antimicrobial peptide (group 4) family.

It localises to the secreted. It is found in the target cell membrane. Its function is as follows. Antibacterial peptide. This peptide gene is up-regulated at the transcriptional level after the venom gland is challenged by Gram-positive bacteria. This chain is Peptide BmKb2, found in Olivierus martensii (Manchurian scorpion).